We begin with the raw amino-acid sequence, 210 residues long: Somatotropin (210 aa).

The N-terminal stretch at 1 to 23 is a signal peptide; the sequence is MARVLVLLSVVLVSLLVNQGRAS. His-38 provides a ligand contact to Zn(2+). Cys-71 and Cys-183 are joined by a disulfide. Position 192 (Glu-192) interacts with Zn(2+). A disulfide bond links Cys-200 and Cys-208.

This sequence belongs to the somatotropin/prolactin family.

Its subcellular location is the secreted. Functionally, growth hormone plays an important role in growth control. The chain is Somatotropin (gh) from Cyprinus carpio (Common carp).